A 295-amino-acid polypeptide reads, in one-letter code: Indole-3-glycerol phosphate synthase (295 aa).

This sequence belongs to the TrpC family.

The catalysed reaction is 1-(2-carboxyphenylamino)-1-deoxy-D-ribulose 5-phosphate + H(+) = (1S,2R)-1-C-(indol-3-yl)glycerol 3-phosphate + CO2 + H2O. It participates in amino-acid biosynthesis; L-tryptophan biosynthesis; L-tryptophan from chorismate: step 4/5. In Prochlorococcus marinus (strain NATL1A), this protein is Indole-3-glycerol phosphate synthase.